Reading from the N-terminus, the 955-residue chain is Glycine dehydrogenase (decarboxylating) (955 aa).

The residue at position 705 (Lys705) is an N6-(pyridoxal phosphate)lysine.

The protein belongs to the GcvP family. As to quaternary structure, the glycine cleavage system is composed of four proteins: P, T, L and H. The cofactor is pyridoxal 5'-phosphate.

It carries out the reaction N(6)-[(R)-lipoyl]-L-lysyl-[glycine-cleavage complex H protein] + glycine + H(+) = N(6)-[(R)-S(8)-aminomethyldihydrolipoyl]-L-lysyl-[glycine-cleavage complex H protein] + CO2. Its function is as follows. The glycine cleavage system catalyzes the degradation of glycine. The P protein binds the alpha-amino group of glycine through its pyridoxal phosphate cofactor; CO(2) is released and the remaining methylamine moiety is then transferred to the lipoamide cofactor of the H protein. This chain is Glycine dehydrogenase (decarboxylating), found in Aliivibrio fischeri (strain MJ11) (Vibrio fischeri).